Consider the following 446-residue polypeptide: Serum factor response D (446 aa).

The region spanning 1 to 61 is the MADS-box domain; sequence MGRKKIKIQR…PNAKEKYFQY (61 aa). Disordered stretches follow at residues 95 to 195, 210 to 296, and 319 to 432; these read KKEK…FNSS, TQEN…CQQV, and CSSP…SNLN. Basic and acidic residues predominate over residues 112–121; it reads SHSEEEDHKS. A compositionally biased stretch (basic residues) spans 133–142; it reads HHNHHHHHHQ. Low complexity-rich tracts occupy residues 143–195 and 216–282; these read YNNN…FNSS and HYNN…NNNN. A compositionally biased stretch (polar residues) spans 322–355; that stretch reads PEDTSPMTSPRTPPFSSTNTNTLQTSPNSQQKSK. Low complexity predominate over residues 365–432; sequence NNNQNNNNQN…SPTSSSSNLN (68 aa).

Its subcellular location is the nucleus. This is Serum factor response D (srfD) from Dictyostelium discoideum (Social amoeba).